Consider the following 1018-residue polypeptide: Transmembrane protein 132A (1018 aa).

An N-terminal signal peptide occupies residues 1-32 (MTERKAAAPRGPYGAWFCLLVALALEVVRVSS). At 33 to 846 (NHDTLDPIYL…VTDLELGMYA (814 aa)) the chain is on the extracellular side. N-linked (GlcNAc...) asparagine glycosylation occurs at Asn276. Residues 606–911 (IEVRSPLSDA…QLDRCSSSGP (306 aa)) form a binds to HSPA5/GRP78 region. The confers cellular localization similar to full-length form stretch occupies residues 666–1018 (LPAPKQEVAL…NYMERIRGSS (353 aa)). A compositionally biased stretch (basic and acidic residues) spans 807-818 (ERAEEEAGKEEN). Residues 807 to 833 (ERAEEEAGKEENEAKEEEEDEEEMVPA) form a disordered region. A compositionally biased stretch (acidic residues) spans 819-830 (EAKEEEEDEEEM). The chain crosses the membrane as a helical span at residues 847–867 (LLGIFCLAILIFLVNGVVFVL). Over 868–1018 (RYQRKEPPDS…NYMERIRGSS (151 aa)) the chain is Cytoplasmic. Residues 900 to 956 (SRQLDRCSSSGPPKGEGGCPCESGAGGDASTVAPSASESPAGSSSTLARKEAGGRRK) form a disordered region. Composition is skewed to low complexity over residues 906–922 (CSSSGPPKGEGGCPCES) and 932–944 (APSASESPAGSSS).

The protein belongs to the TMEM132 family. As to quaternary structure, interacts with HSPA5/GRP78.

The protein localises to the golgi apparatus membrane. It is found in the endoplasmic reticulum membrane. May play a role in embryonic and postnatal development of the brain. Increased resistance to cell death induced by serum starvation in cultured cells. Regulates cAMP-induced GFAP gene expression via STAT3 phosphorylation. The chain is Transmembrane protein 132A (Tmem132a) from Mus musculus (Mouse).